We begin with the raw amino-acid sequence, 641 residues long: WW domain-binding protein 11 (641 aa).

Positions 1–11 (MGRRSTSSTKS) are enriched in polar residues. The interval 1-37 (MGRRSTSSTKSGKFMNPTDQARKEARKRELKKNKKQR) is disordered. The required for nuclear import stretch occupies residues 1 to 45 (MGRRSTSSTKSGKFMNPTDQARKEARKRELKKNKKQRMMVRAAVL). Lys13 bears the N6-acetyllysine mark. Over residues 28 to 37 (RELKKNKKQR) the composition is skewed to basic residues. Residues 75 to 133 (EKVLKDKRKKLRETFERILRLYEKENPDIYKELRKLEVEYEQKRAQLSQYFDAVKNAQH) adopt a coiled-coil conformation. Residue Ser181 is modified to Phosphoserine. The disordered stretch occupies residues 186–213 (LGHGVPRLPPGRKPPGPPPGPPPPQVVQ). Arg192 is subject to Omega-N-methylarginine. The span at 192–210 (RLPPGRKPPGPPPGPPPPQ) shows a compositional bias: pro residues. The interval 217-221 (RKVGF) is interaction with PP1. Tyr236 carries the post-translational modification Phosphotyrosine. Residues 236 to 552 (YSPELAQRGH…RPKADDTSAA (317 aa)) are disordered. Ser237 bears the Phosphoserine mark. Residues 253 to 263 (SEDDGYPEDMD) are compositionally biased toward acidic residues. The span at 276 to 304 (TDKSDGESDGDEFVHRDNGERDNNEEKKS) shows a compositional bias: basic and acidic residues. 2 positions are modified to phosphoserine: Ser279 and Ser283. Residues 306-310 (LSVRF) are interaction with PP1. The span at 351–365 (EFSEDDDEDDSDDSE) shows a compositional bias: acidic residues. 3 positions are modified to phosphoserine: Ser353, Ser361, and Ser364. Residues 366-380 (AEKQSQKQHKEESHS) are compositionally biased toward basic and acidic residues. A compositionally biased stretch (low complexity) spans 386–404 (ASSQQQAPPQSVPPSQIQA). 3 stretches are compositionally biased toward pro residues: residues 405-447 (PPMP…PPGM), 456-504 (RLLP…PPRP), and 510-530 (PLVP…PLPN). Residues 455 to 466 (PRLLPPGPPPGR) carry the PGR motif. A Glycyl lysine isopeptide (Lys-Gly) (interchain with G-Cter in SUMO2) cross-link involves residue Lys557. An N6-acetyllysine modification is found at Lys565. Lys572 participates in a covalent cross-link: Glycyl lysine isopeptide (Lys-Gly) (interchain with G-Cter in SUMO2). The disordered stretch occupies residues 587-623 (RENKGATAAPQRKSEDDSAVPLAKAAPKSGPSVPVSV). Ser600 bears the Phosphoserine mark.

In terms of assembly, interacts with PPP1CA, PPP1CB and PPP1CC. Interacts via the PGR motif with PQBP1 in the nucleus. Interacts with the WW domains of WBP4. In terms of tissue distribution, ubiquitous. Highly expressed in the heart, pancreas, kidney skeletal muscle, placenta and brain (at protein level). Weakly expressed in liver and lung.

Its subcellular location is the nucleus. The protein localises to the cytoplasm. Its function is as follows. Activates pre-mRNA splicing. May inhibit PP1 phosphatase activity. The chain is WW domain-binding protein 11 from Homo sapiens (Human).